Reading from the N-terminus, the 429-residue chain is Glutamyl-tRNA reductase (429 aa).

Substrate is bound by residues 50 to 53, Ser110, 115 to 117, and Gln121; these read TCNR and ETQ. Cys51 functions as the Nucleophile in the catalytic mechanism. Residue 190–195 coordinates NADP(+); it reads GAGEMA.

The protein belongs to the glutamyl-tRNA reductase family. In terms of assembly, homodimer.

It carries out the reaction (S)-4-amino-5-oxopentanoate + tRNA(Glu) + NADP(+) = L-glutamyl-tRNA(Glu) + NADPH + H(+). The protein operates within porphyrin-containing compound metabolism; protoporphyrin-IX biosynthesis; 5-aminolevulinate from L-glutamyl-tRNA(Glu): step 1/2. In terms of biological role, catalyzes the NADPH-dependent reduction of glutamyl-tRNA(Glu) to glutamate 1-semialdehyde (GSA). The protein is Glutamyl-tRNA reductase of Campylobacter hominis (strain ATCC BAA-381 / DSM 21671 / CCUG 45161 / LMG 19568 / NCTC 13146 / CH001A).